The chain runs to 2465 residues: MKPSPHFPEIGKKPKDLIAKEHGFNIAAYISSGADVIAAALRKHVEEEARDLSGEAFLRFMEQLYEQICSLLQSNDVAENLLALRAIDALIDMPFGEGASKVSKFANFLRTVFEVKRDPEVLVPASAVLGHLAKAGGAMTADEVERQIKTALGWLGGDRVEYRRFASVLILKEMAENASTVFNVHVPEFVDAIWVALRDPKQAVRERAVEALRACLHVIEKRETRWRVQWYYRMCEAAQVGLGKNASVHSIHGSLLAVGELLRNTGEFMMSRYREVADIVLNYLRHRDQLVRRSITSLLPRIAHFLRDRFVTNYLKICMDHILFVLRTPDERASGFVALGEMAGALGAELVPYLPLITSHLHDAIAPRRGRPSLEAISCVGSFAKAMGPAMEPHIRGGLLDAMFSAGLSDKLVEALESISTSIPSLLPTIQERLLDCISQALPKSSVRPGAAVGRGSRSSSLQQFVDSGGPVLVQLALGTLANFNFKGHELLEFARESVILYLEDEDCSTRKAAATCCCKLVAHSLSASSSSQFSSNRPNRMGGAKRRRLVEEIVEKLLMAAVADADVGVRSSVFKALYRNPSFDDFLAQADIMTSIFVALNDEEYHVRELAISVAGRLSEKNPAYVLPALRRYLIQLLTYLDQSMDSKCREESARLLGCLIRSCARLILPYIAPIHKALVARLREGTGPNANNALAAGVLATVGELAKVGGFAMRQYLPELMPLVVDALLDGGAVSKREVAVATLGQVIQSTGYVISPYNEYPPLLGLLLKLLNGELEWSTRLEVLKVLGIMGALDPHAHKRNQHKLPGQHREVLRPTMETAQHIVSMEELPTDFWPSFSASEDYYSTVAISSLMRILHDPSLSSYHQMVVGSLIFIFKSMGLGCVPYLPKVLPELFRAVRMCEDGGLKEFITWKLGTLVSIVRQHIRKYLQEILSLVSELWTSSFSLPAPNRTVQGPQASPVLHLVEQLCLALNDEFRMYILHILPSCIQVLGDAERCNDYYYVPDILHTLEVFGGNLDEHMHLVAPVLVRLFKVELVDIRRRAIVTLTKLIPTVQVGTHVSVLVHHLKLVLDGNNDDLRKDAAEALCCLAHALGEDFTIFVSSIHKLLVKHHMRYRKWDEIENRLLRREPLISENLSVQKYTQCPPEVISDPLDDFGGVPSEEADETQRQPRSHQVNDVRLRSAGEASQRSTREDWAEWMRHFSIALLKESPSPALRTCARLAQLQPSVGRELFAAGFASCWAQMNETSQEQLVRSLKTAFSSQNIPPEILATLLNLAEFMEHDEKPLPIDTRLLGALAEKCRAFAKALHYKEMEFEAVCSKKMGANPVTVVESLIHINNQLHQHEAAIGILTYSQQHLEVQLKESWYEKLHRWDEALKAYKAKSSQASGPLQNLDATLGRMRCLAALARWEDLSALCREQWTGSEPSARLEMAPMAANAAWHMGEWDHMAEYVSRLDDGDENKLRILGNTTASGDGSSNGAFFRAVLSVRCKKYEEARVYVERARRCLATELAALVLESYERAYNNMVRVQQLSELEEVIDYCTLPMESPIADSRRELIRNMWNERIKGTKRNVEVWQALLAVRELVLPPNEDRDTWIKFAKLCWKSGRISQAKSTLVKLLQFDPESSPELTLYHGHPQVVLAYLKYQYAVGDELKRRDAFCRLQDLSVQLATATNSYSGTLASQVATSNAGVPLIARVYLTLASWKRALSPGLDDDSIQEILVSYKNATLNAKDWGKAWHLWALFNTEVMSRYTLRGRPDIAGKYVVAAVTGYFYSIACASTTKGVDDSLQDILRLLTLWFNHGATSEVQMALQKGFSLVNIEMWLVVLPQIIARIHSNNKIVRELIQSLLVRIGKDHPQALMYPLLVACKSISILRQRAAQEVVDKIRQHSGGLVDQAQLVSKELIRVAILWHEMWHEALEEASRMYFGEHNIEGMLAVLEPLHAMLERGPETIKENTFIQAYGHELLEAHECCLKYRATGEDAELTKAWDLYYHVFRRIDKQLPSLTTLDLHSVSPELLECRKLELAVPGTYSADAPLVTIEYFVPQLIVITSKQRPRKLTIHGSDGNDYAFLLKGHEDLRQDERVMQLFGLVNTLLENSRKTSEKDLSIQRYAVIPLSPNSGLIGWVPNCDTLHALIREYRDARKIFLNQEHRCMLSFAPDYDHLPLIAKVEVFQHALENSEGNDLAKVLWLKSRTSEVWLERRTNYTRSLAVMSMVGYLLGLGDRHPSNLMLDRYSGKILHIDFGDCFEASMNREKFPEKVPFRLTRMLVKAMEVSGIEGTFRTTCENVMQVLRTNKDSVMAMMEAFVHDPLINWRLFNFNEVPQVTNYGNAHSHTVVNSEEAANRELMQPPRGARERELLQAVNQLGDANEVLNERAVAVMARMSHKLTGRDFSSGSSLSGAGSSTQHGNEHLASGDTREVEPGLSVKVQVQRLILQATSHENLCQNYVGWCPFW.

HEAT repeat units follow at residues 184 to 221 (VHVP…VIEK), 271 to 308 (SRYR…FLRD), 348 to 389 (AELV…AMGP), 549 to 587 (RLVE…FDDF), 588 to 625 (LAQA…KNPA), 717 to 755 (QYLP…STGY), 761 to 799 (NEYP…LDPH), 888 to 926 (PYLP…IVRQ), 981 to 1018 (MYIL…VFGG), 1022 to 1059 (EHMH…TVQV), and 1061 to 1098 (THVS…ALGE). The tract at residues 1158–1191 (DFGGVPSEEADETQRQPRSHQVNDVRLRSAGEAS) is disordered. Residues 1297-1877 (LLGALAEKCR…MYPLLVACKS (581 aa)) enclose the FAT domain. The 319-residue stretch at 2051–2369 (FVPQLIVITS…PPRGAREREL (319 aa)) folds into the PI3K/PI4K catalytic domain. The segment at 2057–2063 (VITSKQR) is G-loop. The catalytic loop stretch occupies residues 2230–2238 (GLGDRHPSN). Positions 2250–2275 (HIDFGDCFEASMNREKFPEKVPFRLT) are activation loop. The disordered stretch occupies residues 2401–2431 (RDFSSGSSLSGAGSSTQHGNEHLASGDTREV). The segment covering 2404-2415 (SSGSSLSGAGSS) has biased composition (low complexity). The FATC domain maps to 2433–2465 (PGLSVKVQVQRLILQATSHENLCQNYVGWCPFW).

The protein belongs to the PI3/PI4-kinase family. The target of rapamycin complex 1 (TORC1) is composed of at least RAPTOR, LST8 and TOR.

It carries out the reaction L-seryl-[protein] + ATP = O-phospho-L-seryl-[protein] + ADP + H(+). The catalysed reaction is L-threonyl-[protein] + ATP = O-phospho-L-threonyl-[protein] + ADP + H(+). With respect to regulation, insensitive to inhibition by rapamycin. Its function is as follows. Component of TORC1 complex, which is an essential cell growth regulator that controls plant development. Acts through the phosphorylation of downstream effectors that are recruited by the binding partner RAPTOR. Acts by activating transcription, protein synthesis and ribosome biogenesis, and inhibiting mRNA degradation and autophagy. This Oryza sativa subsp. japonica (Rice) protein is Serine/threonine-protein kinase TOR.